We begin with the raw amino-acid sequence, 73 residues long: Exodeoxyribonuclease 7 small subunit (73 aa).

This sequence belongs to the XseB family. In terms of assembly, heterooligomer composed of large and small subunits.

It localises to the cytoplasm. It catalyses the reaction Exonucleolytic cleavage in either 5'- to 3'- or 3'- to 5'-direction to yield nucleoside 5'-phosphates.. In terms of biological role, bidirectionally degrades single-stranded DNA into large acid-insoluble oligonucleotides, which are then degraded further into small acid-soluble oligonucleotides. The protein is Exodeoxyribonuclease 7 small subunit of Clostridium novyi (strain NT).